The sequence spans 2241 residues: Large tegument protein deneddylase (2241 aa).

The tract at residues 1 to 238 (MKVTQASCHQ…IDLTGVVRES (238 aa)) is deubiquitination activity. Positions 4-226 (TQASCHQGDI…AARLVSTYRD (223 aa)) constitute a Peptidase C76 domain. Catalysis depends on residues C24, D160, and H162. Residues 239–314 (ADTAATTTTA…STTSKTLATA (76 aa)) form a disordered region. Low complexity predominate over residues 240–250 (DTAATTTTAAP). The span at 251 to 268 (SLPPLPDPIVDPGCPPGV) shows a compositional bias: pro residues. Positions 304–314 (PSTTSKTLATA) are enriched in low complexity. An interaction with inner tegument protein region spans residues 327–331 (SSAVP). Positions 1170–1229 (RSSQQKMEEQLQETRQQMTETSERLDRSLRQDPGSSSVTRVPEKPFKGQELAGRITPPPA) are disordered. Residues 1190–1199 (TSERLDRSLR) are compositionally biased toward basic and acidic residues.

This sequence belongs to the herpesviridae large tegument protein family. In terms of assembly, interacts with host CUL1 and CUL4A; these interactions inhibit the E3 ligase activity of cullins. Interacts with inner tegument protein. Interacts with capsid vertex specific component CVC2. Interacts with the major capsid protein/MCP.

The protein localises to the virion tegument. The protein resides in the host cytoplasm. It localises to the host nucleus. The catalysed reaction is Thiol-dependent hydrolysis of ester, thioester, amide, peptide and isopeptide bonds formed by the C-terminal Gly of ubiquitin (a 76-residue protein attached to proteins as an intracellular targeting signal).. Its function is as follows. Large tegument protein that plays multiple roles in the viral cycle. During viral entry, remains associated with the capsid while most of the tegument is detached and participates in the capsid transport toward the host nucleus. Plays a role in the routing of the capsid at the nuclear pore complex and subsequent uncoating. Within the host nucleus, acts as a deneddylase and promotes the degradation of nuclear CRLs (cullin-RING ubiquitin ligases) and thereby stabilizes nuclear CRL substrates, while cytoplasmic CRLs remain unaffected. These modifications prevent host cell cycle S-phase progression and create a favorable environment allowing efficient viral genome replication. Participates later in the secondary envelopment of capsids. Indeed, plays a linker role for the association of the outer viral tegument to the capsids together with the inner tegument protein. In Human cytomegalovirus (strain AD169) (HHV-5), this protein is Large tegument protein deneddylase (UL48).